A 681-amino-acid polypeptide reads, in one-letter code: Macrolide export ATP-binding/permease protein MacB (681 aa).

In terms of domain architecture, ABC transporter spans 6–244; it reads LKLAAVTRRF…FAEVGVGAAA (239 aa). 42 to 49 provides a ligand contact to ATP; sequence GASGSGKS. Positions 246–273 are enriched in low complexity; it reads TETAADTRSAPASGDAPPPANNDTAADP. Residues 246 to 298 form a disordered region; sequence TETAADTRSAPASGDAPPPANNDTAADPAPAPDASPPAPAVSPKHAGWRGSRS. Residues 274-285 show a composition bias toward pro residues; the sequence is APAPDASPPAPA. Helical transmembrane passes span 306–326, 554–574, 611–631, and 644–664; these read CLTMLGIIIGITSVVSIVAVG, LTLLLSLIAVISLVVGGIGVM, LVCLLGGTIGIALSFGLGALF, and AGAIVTAFVCSTLTGVIFGFM.

The protein belongs to the ABC transporter superfamily. Macrolide exporter (TC 3.A.1.122) family. Homodimer.

It localises to the cell inner membrane. In terms of biological role, non-canonical ABC transporter that contains transmembrane domains (TMD), which form a pore in the inner membrane, and an ATP-binding domain (NBD), which is responsible for energy generation. Confers resistance against macrolides. This is Macrolide export ATP-binding/permease protein MacB from Burkholderia orbicola (strain AU 1054).